The chain runs to 240 residues: Ribonuclease HII (240 aa).

The RNase H type-2 domain occupies Glu29–Leu220. The a divalent metal cation site is built by Asp35, Glu36, and Asp129.

This sequence belongs to the RNase HII family. It depends on Mn(2+) as a cofactor. Mg(2+) serves as cofactor.

It is found in the cytoplasm. The catalysed reaction is Endonucleolytic cleavage to 5'-phosphomonoester.. Functionally, endonuclease that specifically degrades the RNA of RNA-DNA hybrids. This Nocardioides sp. (strain ATCC BAA-499 / JS614) protein is Ribonuclease HII.